The following is a 336-amino-acid chain: Dual specificity mitogen-activated protein kinase kinase sek-1 (336 aa).

The region spanning 50-311 (LVVLEELGKG…YPELLAMPFM (262 aa)) is the Protein kinase domain. ATP-binding positions include 56 to 64 (LGKGGYGIV) and Lys79. Asp176 functions as the Proton acceptor in the catalytic mechanism. Ser204 is subject to Phosphoserine. Thr208 is subject to Phosphothreonine.

This sequence belongs to the protein kinase superfamily. STE Ser/Thr protein kinase family. MAP kinase kinase subfamily. As to quaternary structure, interacts with nsy-1. Interacts with unc-16. Mg(2+) is required as a cofactor. As to expression, expressed in linker cell in males.

The catalysed reaction is L-seryl-[protein] + ATP = O-phospho-L-seryl-[protein] + ADP + H(+). It catalyses the reaction L-threonyl-[protein] + ATP = O-phospho-L-threonyl-[protein] + ADP + H(+). It carries out the reaction L-tyrosyl-[protein] + ATP = O-phospho-L-tyrosyl-[protein] + ADP + H(+). Activated by nsy-1-mediated phosphorylation. Its function is as follows. Dual specificity protein kinase which acts as an essential component of the p38 signal transduction pathway which is also composed of upstream effector nsy-1 and downstream effector pmk-1. May phosphorylate pmk-1. Downstream of CaMKII unc-43 and adapter protein tir-1, plays a role in determining asymmetric cell fates in olfactory AWC neurons during neuronal development. Activation results in the repression of odorant receptor str-2 expression in one of the 2 AWC neurons. Involved in resistance to pathogenic Gram-positive and Gram-negative bacterial and fungal infection. Involved in resistance to the nematotoxic C.cinerea galectin Cgl2. Probably by promoting pmk-1-mediated activation of skn-1, involved in the up-regulation of gcs-1 and glutathione-S-transferase gst-4 expression upon bacterial infection. Probably downstream of tir-1, required for the expression of antimicrobial peptide nlp-29 in the epidermis in response to fungal infection or physical injury. Regulates susceptibility of B.thuringiensis pore-forming toxin Cry5B and Cry21A. Involved in the response to oxidative stress. May regulate transcription factor daf-16 localization during oxidative stress. By phosphorylating pmk-1, regulates skn-1 localization during oxidative stress. By phosphorylating and activating pmk-1, plays a role in the stabilization of transcription factor rnt-1 in the intestine during oxidative stress. Up-regulates expression of gcs-1 in intestine upon arsenite treatment. Regulates germline proliferation in response to osmotic stress, starvation and germline apoptosis induced by heavy metals, such as Cu(2+). In association with mek-1, regulates germline cell apoptosis in response to oxidative, osmotic and heat shock stresses. Plays a role downstream of tir-1/nsy-1 in regulating susceptibility to anoxia. In males, by regulating pqn-41 expression, involved in non-apoptotic death of the linker cell which guides gonad elongation during larval development. Involved in egg laying. This is Dual specificity mitogen-activated protein kinase kinase sek-1 from Caenorhabditis elegans.